We begin with the raw amino-acid sequence, 583 residues long: Thiol:disulfide interchange protein DsbD (583 aa).

Residues Met1–Ala18 form the signal peptide. 2 disulfide bridges follow: Cys118–Cys124 and Cys186–Cys306. Transmembrane regions (helical) follow at residues Gly168 to Leu188, Ser214 to Gly234, Trp245 to Phe265, Leu289 to Ala309, Phe326 to Val346, Trp359 to Leu379, Val382 to Cys402, and Leu413 to Val433. The Thioredoxin domain maps to Val458–Glu581. A disulfide bridge links Cys496 with Cys499.

This sequence belongs to the thioredoxin family. DsbD subfamily.

Its subcellular location is the cell inner membrane. It catalyses the reaction [protein]-dithiol + NAD(+) = [protein]-disulfide + NADH + H(+). It carries out the reaction [protein]-dithiol + NADP(+) = [protein]-disulfide + NADPH + H(+). Required to facilitate the formation of correct disulfide bonds in some periplasmic proteins and for the assembly of the periplasmic c-type cytochromes. Acts by transferring electrons from cytoplasmic thioredoxin to the periplasm. This transfer involves a cascade of disulfide bond formation and reduction steps. The protein is Thiol:disulfide interchange protein DsbD of Pseudomonas fluorescens (strain ATCC BAA-477 / NRRL B-23932 / Pf-5).